The primary structure comprises 602 residues: Arginine--tRNA ligase (602 aa).

Residues 132–142 carry the 'HIGH' region motif; the sequence is ANPTGPLHVGH.

The protein belongs to the class-I aminoacyl-tRNA synthetase family. Monomer.

The protein resides in the cytoplasm. The enzyme catalyses tRNA(Arg) + L-arginine + ATP = L-arginyl-tRNA(Arg) + AMP + diphosphate. This chain is Arginine--tRNA ligase, found in Cupriavidus metallidurans (strain ATCC 43123 / DSM 2839 / NBRC 102507 / CH34) (Ralstonia metallidurans).